The chain runs to 338 residues: Heat-inducible transcription repressor HrcA (338 aa).

It belongs to the HrcA family.

Its function is as follows. Negative regulator of class I heat shock genes (grpE-dnaK-dnaJ and groELS operons). Prevents heat-shock induction of these operons. This chain is Heat-inducible transcription repressor HrcA, found in Nitrosomonas europaea (strain ATCC 19718 / CIP 103999 / KCTC 2705 / NBRC 14298).